We begin with the raw amino-acid sequence, 798 residues long: Integrin beta-1 (798 aa).

The N-terminal stretch at 1-20 (MNLQLIFWIGLISSVCCVFG) is a signal peptide. The Extracellular portion of the chain corresponds to 21-728 (QADEDRCLKA…ETPECPTGPD (708 aa)). A PSI domain is found at 26 to 76 (RCLKANAKSCGECIQAGPNCGWCTNSTFLQEGMPTSARCDDLEALKKKGCH). 28 cysteine pairs are disulfide-bonded: cysteine 27/cysteine 45, cysteine 35/cysteine 464, cysteine 38/cysteine 64, cysteine 48/cysteine 75, cysteine 207/cysteine 213, cysteine 261/cysteine 301, cysteine 401/cysteine 415, cysteine 435/cysteine 462, cysteine 466/cysteine 486, cysteine 477/cysteine 489, cysteine 491/cysteine 500, cysteine 502/cysteine 533, cysteine 516/cysteine 531, cysteine 525/cysteine 536, cysteine 538/cysteine 553, cysteine 555/cysteine 576, cysteine 560/cysteine 574, cysteine 568/cysteine 579, cysteine 581/cysteine 590, cysteine 592/cysteine 615, cysteine 599/cysteine 613, cysteine 607/cysteine 618, cysteine 620/cysteine 630, cysteine 633/cysteine 636, cysteine 640/cysteine 691, cysteine 646/cysteine 665, cysteine 649/cysteine 661, and cysteine 699/cysteine 723. Positions 75–91 (CHPNDTENPRGSKDIKK) are enriched in basic and acidic residues. The interval 75 to 105 (CHPNDTENPRGSKDIKKNKNVTNRSKGTAEK) is disordered. Residues asparagine 94 and asparagine 97 are each glycosylated (N-linked (GlcNAc...) asparagine). Residues 140–378 (DYPIDLYYLM…QLIIDAYNSL (239 aa)) form the VWFA domain. Mg(2+)-binding residues include serine 152 and serine 154. Ca(2+) contacts are provided by serine 154, aspartate 157, aspartate 158, and glutamate 189. The segment at 207–213 (CTNEQNC) is CX3CL1-binding. Residue asparagine 212 is glycosylated (N-linked (GlcNAc...) asparagine). Ca(2+) contacts are provided by asparagine 244, aspartate 246, proline 248, and glutamate 249. Mg(2+) is bound at residue glutamate 249. Asparagine 269 is a glycosylation site (N-linked (GlcNAc...) asparagine). A CX3CL1-binding region spans residues 295-314 (LPNDGQCHLKNDVYTMSHYY). Alanine 362 provides a ligand contact to Ca(2+). Positions 383–465 (ILENSKLPEG…IILQFICECE (83 aa)) are interaction with TMEM182. 2 N-linked (GlcNAc...) asparagine glycosylation sites follow: asparagine 406 and asparagine 417. I-EGF domains follow at residues 466–501 (CQGE…RHCE), 502–554 (CSTD…KFCE), 555–591 (CDNF…SACD), and 592–631 (CSLD…PTCE). Asparagine 481 carries an N-linked (GlcNAc...) asparagine glycan. N-linked (GlcNAc...) asparagine glycosylation occurs at asparagine 520. An N-linked (GlcNAc...) asparagine glycan is attached at asparagine 584. N-linked (GlcNAc...) asparagine glycosylation is present at asparagine 669. A helical membrane pass occupies residues 729 to 749 (IIPIVAGVVAGIVLIGLALLL). The Cytoplasmic segment spans residues 750–798 (IWKLLMIIHDRREFAKFEKERMNAKWDTGENPIYKSAVTTVVNPKYEGK). A signal for sorting from recycling endosomes; interaction with ACAP1 region spans residues 762–767 (EFAKFE). A Phosphothreonine modification is found at threonine 777. At tyrosine 783 the chain carries Phosphotyrosine. At serine 785 the chain carries Phosphoserine. Residues 785 to 792 (SAVTTVVN) are interaction with ITGB1BP1. Residue threonine 789 is modified to Phosphothreonine. The residue at position 794 (lysine 794) is an N6-acetyllysine; alternate. Lysine 794 participates in a covalent cross-link: Glycyl lysine isopeptide (Lys-Gly) (interchain with G-Cter in SUMO1); alternate.

Belongs to the integrin beta chain family. As to quaternary structure, interacts with seprase FAP (seprase); the interaction occurs at the cell surface of invadopodia membrane in a collagen-dependent manner. Heterodimer of an alpha and a beta subunit. Beta-1 associates with either alpha-1, alpha-2, alpha-3, alpha-4, alpha-5, alpha-6, alpha-7, alpha-8, alpha-9, alpha-10, alpha-11 or alpha-V. ITGA6:ITGB1 is found in a complex with CD9; interaction takes place in oocytes and is involved in sperm-egg fusion. Binds LGALS3BP and NMRK2, when associated with alpha-7, but not with alpha-5. Interacts with FLNA, FLNB, FLNC and RANBP9. Interacts with KRT1 in the presence of RACK1 and SRC. Interacts with JAML; integrin alpha-4/beta-1 may regulate leukocyte to endothelial cells adhesion by controlling JAML homodimerization. Interacts with RAB21. Interacts (via the cytoplasmic region) with RAB25 (via the hypervariable C-terminal region). Interacts with MYO10. Interacts with ITGB1BP1 (via C-terminal region); the interaction is a prerequisite for focal adhesion disassembly. Interacts with TLN1; the interaction is prevented by competitive binding of ITGB1BP1. Interacts with ACAP1; required for ITGB1 recycling. Interacts with ASAP3. Interacts with FERMT2; the interaction is inhibited in presence of ITGB1BP1. Interacts with DAB2. Interacts with FGR and HCK. Interacts with alpha-7A and alpha-7B in adult skeletal muscle. Interacts with alpha-7B in cardiomyocytes of adult heart. Interacts with EMP2; the interaction may be direct or indirect and ITGB1 has a heterodimer form. ITGA5:ITGB1 interacts with CCN3. ITGA4:ITGB1 is found in a ternary complex with CX3CR1 and CX3CL1. ITGA5:ITGB1 interacts with FBN1. ITGA5:ITGB1 acts as a receptor for fibronectin FN1 and mediates R-G-D-dependent cell adhesion to FN1. ITGA5:ITGB1 interacts with IL1B. Interacts with MDK. ITGA4:ITGB1 interacts with MDK; this interaction mediates MDK-induced osteoblast cells migration through PXN phosphorylation. ITGA6:ITGB1 interacts with MDK; this interaction mediates MDK-induced neurite-outgrowth. ITGA5:ITGB1 interacts with ACE2. Interacts with TMEM182 and LAMB1. Interacts with tensin TNS3; TNS3 also interacts with PEAK1, thus acting as an adapter molecule to bridge the association of PEAK1 with ITGB1. Interacts with tensin TNS4; the interaction displaces tensin TNS3 from the ITGB1 cytoplasmic tail and promotes ITGB1 stability. Integrin ITGA9:ITGB1 interacts with SPP1/OPN (via N-terminus). Integrin ITGA9:ITGB1 interacts with TNC/TNFN3 (via the 3rd Fibronectin type-III domain). Integrins ITGA4:ITGB1 and ITGA9:ITGB1 interact with SVEP1 (via Sushi domain 21); thereby inhibit Ca(2+) intracellular signaling and as a result repress vasocontraction. ITGA4:ITGB1 and ITGA5:ITGB1 interacts with SELP. Interacts with CD248. ITGA5:ITGB1 interacts with IGFBP1. ITGA4:ITGB1 interacts with BCAM. Interacts with ADGRG6.

It is found in the cell membrane. Its subcellular location is the cell projection. The protein resides in the invadopodium membrane. It localises to the ruffle membrane. The protein localises to the recycling endosome. It is found in the melanosome. Its subcellular location is the cell junction. The protein resides in the focal adhesion. It localises to the lamellipodium. The protein localises to the ruffle. In terms of biological role, integrins alpha-1/beta-1, alpha-2/beta-1, alpha-10/beta-1 and alpha-11/beta-1 are receptors for collagen. Integrins alpha-1/beta-1 and alpha-2/beta-2 recognize the proline-hydroxylated sequence G-F-P-G-E-R in collagen. Integrins alpha-2/beta-1, alpha-3/beta-1, alpha-4/beta-1, alpha-5/beta-1, alpha-8/beta-1, alpha-10/beta-1, alpha-11/beta-1 and alpha-V/beta-1 are receptors for fibronectin. Alpha-4/beta-1 recognizes one or more domains within the alternatively spliced CS-1 and CS-5 regions of fibronectin. Integrin alpha-5/beta-1 is a receptor for fibrinogen. Integrin alpha-1/beta-1, alpha-2/beta-1, alpha-6/beta-1 and alpha-7/beta-1 are receptors for lamimin. Integrin alpha-6/beta-1 (ITGA6:ITGB1) is present in oocytes and is involved in sperm-egg fusion. Integrin alpha-4/beta-1 is a receptor for VCAM1 and recognizes the sequence Q-I-D-S in VCAM1. Integrin alpha-9/beta-1 is a receptor for VCAM1, cytotactin and osteopontin. It recognizes the sequence A-E-I-D-G-I-E-L in cytotactin. Integrin alpha-3/beta-1 is a receptor for epiligrin, thrombospondin and CSPG4. Integrin alpha-3/beta-1 provides a docking site for FAP (seprase) at invadopodia plasma membranes in a collagen-dependent manner and hence may participate in the adhesion, formation of invadopodia and matrix degradation processes, promoting cell invasion. Alpha-3/beta-1 may mediate with LGALS3 the stimulation by CSPG4 of endothelial cells migration. Integrin alpha-V/beta-1 is a receptor for vitronectin. Beta-1 integrins recognize the sequence R-G-D in a wide array of ligands. When associated with alpha-7/beta-1 integrin, regulates cell adhesion and laminin matrix deposition. Involved in promoting endothelial cell motility and angiogenesis. Involved in osteoblast compaction through the fibronectin fibrillogenesis cell-mediated matrix assembly process and the formation of mineralized bone nodules. May be involved in up-regulation of the activity of kinases such as PKC via binding to KRT1. Together with KRT1 and RACK1, serves as a platform for SRC activation or inactivation. Plays a mechanistic adhesive role during telophase, required for the successful completion of cytokinesis. ITGA4:ITGB1 binds to fractalkine (CX3CL1) and may act as its coreceptor in CX3CR1-dependent fractalkine signaling. ITGA4:ITGB1 and ITGA5:ITGB1 bind to PLA2G2A via a site (site 2) which is distinct from the classical ligand-binding site (site 1) and this induces integrin conformational changes and enhanced ligand binding to site 1. ITGA5:ITGB1 acts as a receptor for fibrillin-1 (FBN1) and mediates R-G-D-dependent cell adhesion to FBN1. ITGA5:ITGB1 is a receptor for IL1B and binding is essential for IL1B signaling. ITGA5:ITGB3 is a receptor for soluble CD40LG and is required for CD40/CD40LG signaling. Plays an important role in myoblast differentiation and fusion during skeletal myogenesis. ITGA9:ITGB1 may play a crucial role in SVEP1/polydom-mediated myoblast cell adhesion. Integrins ITGA9:ITGB1 and ITGA4:ITGB1 repress PRKCA-mediated L-type voltage-gated channel Ca(2+) influx and ROCK-mediated calcium sensitivity in vascular smooth muscle cells via their interaction with SVEP1, thereby inhibit vasocontraction. The polypeptide is Integrin beta-1 (Camelus bactrianus (Bactrian camel)).